A 1891-amino-acid chain; its full sequence is TATA-binding protein-associated factor mot1 (1891 aa).

An HEAT 1 repeat occupies 30-68 (PDELFNLLGRILPYLRSKSWDTRAAAAKAIGLIVANADT). 3 disordered regions span residues 184–216 (FVASREHSIQGTSQPLASPIEPANGEESGLSKR), 241–283 (LSSR…LDRS), and 295–316 (FKGASVPENPLLQPESTEEGPN). The segment covering 264–275 (ENGEERNGDSKP) has biased composition (basic and acidic residues). 2 HEAT repeats span residues 473–511 (SKLMDGVLEAVMKGLGDYDDDVRAVSAATLVPIAEEFVK) and 569–606 (SSFGKLVPRLYPFLRHTITSVRSAVLRALMTFLQLEGE). The span at 699-710 (SAAAPARSSPAS) shows a compositional bias: low complexity. Residues 699–740 (SAAAPARSSPASNTPEGTKGRRRKSEKKEAPPPSAHNVDGHM) form a disordered region. 4 HEAT repeats span residues 957-996 (PKKPSHIIKGMMDSIKKEENAELQQRSATAITSLVEYYTT), 1139-1177 (YPWVVDLLPLVVKALQCNLSVIRYAAAKCFATICSVITV), 1181-1216 (TMLVEKVLPMINDALDVHHRQGAVECIYHLIHVMED), and 1219-1257 (LPYVIFLVVPVLGRMSDSDNEVRLLATTSFATLVKLVPL). The 174-residue stretch at 1316–1489 (AFLNRYNLHG…WSLFDFLMPG (174 aa)) folds into the Helicase ATP-binding domain. 1329 to 1336 (DDMGLGKT) provides a ligand contact to ATP. The DEAH box motif lies at 1440–1443 (DEGH). The stretch at 1526–1565 (EALHKQVLPFLLRRLKEEVLNDLPPKIIQNYYCDPSELQR) is one HEAT 8 repeat. The region spanning 1663–1813 (DLSGASYVSP…STVVNQQNAG (151 aa)) is the Helicase C-terminal domain.

This sequence belongs to the SNF2/RAD54 helicase family. In terms of assembly, forms the NCT transcriptional regulatory complex with nctA and nctB.

The protein localises to the nucleus. In terms of biological role, regulates transcription in association with TATA binding protein (TBP). Removes TBP from the TATA box via its C-terminal ATPase activity. Both transcription activation and repression require its ATPase activity. Part of the NCT transcriptional regulatory complex that acts as a key regulator of ergosterol biosynthesis and the azole exporter cdr1B. The NCT complex binds the promoters of genes linked to azole susceptibility, and especially represses the expression of cdr1B transporter. In Aspergillus fumigatus (strain ATCC MYA-4609 / CBS 101355 / FGSC A1100 / Af293) (Neosartorya fumigata), this protein is TATA-binding protein-associated factor mot1.